The sequence spans 108 residues: uncharacterized protein (108 aa).

The segment covering 1 to 10 (MDMLHNKCSD) has biased composition (basic and acidic residues). Residues 1 to 27 (MDMLHNKCSDAIKSTSNSNLSNEVDKQ) are disordered. The segment covering 12–22 (IKSTSNSNLSN) has biased composition (polar residues).

This is an uncharacterized protein from Saccharomyces cerevisiae (strain ATCC 204508 / S288c) (Baker's yeast).